The sequence spans 65 residues: Small ribosomal subunit protein bS21 (65 aa).

The segment covering 33–42 (RRREHYEKPS) has biased composition (basic and acidic residues). The segment at 33–65 (RRREHYEKPSVKRKRKEAARLRKLQKMAREANN) is disordered. The segment covering 43-58 (VKRKRKEAARLRKLQK) has biased composition (basic residues).

It belongs to the bacterial ribosomal protein bS21 family.

The polypeptide is Small ribosomal subunit protein bS21 (Herpetosiphon aurantiacus (strain ATCC 23779 / DSM 785 / 114-95)).